The following is a 257-amino-acid chain: UPF0246 protein RHOS4_29700 (257 aa).

The protein belongs to the UPF0246 family.

This Cereibacter sphaeroides (strain ATCC 17023 / DSM 158 / JCM 6121 / CCUG 31486 / LMG 2827 / NBRC 12203 / NCIMB 8253 / ATH 2.4.1.) (Rhodobacter sphaeroides) protein is UPF0246 protein RHOS4_29700.